The following is a 404-amino-acid chain: Flavohemoprotein (404 aa).

One can recognise a Globin domain in the interval 1–138; sequence MLSEQTRSLV…LADTLIGIEN (138 aa). Residue His85 participates in heme b binding. Residues Tyr95 and Glu137 each act as charge relay system in the active site. The tract at residues 149–404 is reductase; sequence GGWSGWRPFR…EVFGSHPGDD (256 aa). The 112-residue stretch at 152–263 folds into the FAD-binding FR-type domain; sequence SGWRPFRVAK…SAPQGDFFLH (112 aa). Residues Tyr190 and 206 to 209 contribute to the FAD site; that span reads RQYS. Position 276–281 (276–281) interacts with NADP(+); that stretch reads GVGQTP. 396–399 is an FAD binding site; the sequence is VFGS.

Belongs to the globin family. Two-domain flavohemoproteins subfamily. The protein in the C-terminal section; belongs to the flavoprotein pyridine nucleotide cytochrome reductase family. The cofactor is heme b. Requires FAD as cofactor.

It carries out the reaction 2 nitric oxide + NADPH + 2 O2 = 2 nitrate + NADP(+) + H(+). The enzyme catalyses 2 nitric oxide + NADH + 2 O2 = 2 nitrate + NAD(+) + H(+). In terms of biological role, is involved in NO detoxification in an aerobic process, termed nitric oxide dioxygenase (NOD) reaction that utilizes O(2) and NAD(P)H to convert NO to nitrate, which protects the bacterium from various noxious nitrogen compounds. Therefore, plays a central role in the inducible response to nitrosative stress. This chain is Flavohemoprotein, found in Chromobacterium violaceum (strain ATCC 12472 / DSM 30191 / JCM 1249 / CCUG 213 / NBRC 12614 / NCIMB 9131 / NCTC 9757 / MK).